The chain runs to 197 residues: Dermorphin-1 (197 aa).

A signal peptide spans 1 to 20; that stretch reads MSFLKKSLLLILFLGLVSLS. The propeptide occupies 21–45; sequence VCKEEKRETEEENENEENHEEGSEM. Residues 24–197 form a disordered region; that stretch reads EEKRETEEEN…GYPSGEAKKM (174 aa). Acidic residues predominate over residues 30–39; it reads EEENENEENH. Over residues 40-62 the composition is skewed to basic and acidic residues; the sequence is EEGSEMKRYMFHLMDGEAKKRDS. Met49 carries the post-translational modification D-methionine. At Asp54 the chain carries Aspartic acid 1-amide. Positions 56–77 are excised as a propeptide; it reads EAKKRDSEENEIEENHEEGSEM. At Ala81 the chain carries D-alanine (Ala). Ser86 is modified (serine amide). Positions 88–97 are enriched in basic and acidic residues; that stretch reads EAKKIKRVSE. Positions 88-112 are excised as a propeptide; sequence EAKKIKRVSEEENENEENHEEGSEM. Ala116 carries the post-translational modification D-alanine (Ala). Ser121 carries the serine amide modification. A compositionally biased stretch (basic and acidic residues) spans 123-132; that stretch reads EAKKIKRESE. Residues 123–147 constitute a propeptide that is removed on maturation; sequence EAKKIKRESEEEKEIEENHEEGSEM. Position 151 is a D-alanine (Ala) (Ala151). Ser156 is subject to Serine amide. Residues 158 to 182 constitute a propeptide that is removed on maturation; it reads EAKKIKRESEEENENEENHEEGSEM. Positions 167–176 are enriched in acidic residues; it reads EEENENEENH. Ala186 is subject to D-alanine (Ala). Ser191 bears the Serine amide mark. Positions 193–197 are excised as a propeptide; that stretch reads EAKKM.

This sequence belongs to the frog skin active peptide (FSAP) family. Dermorphin subfamily. In terms of tissue distribution, expressed by the skin glands.

Its subcellular location is the secreted. Its function is as follows. Dermorphin has a very potent opiate-like activity. It has high affinity and selectivity for mu-type opioid receptors. Functionally, deltorphin has a very potent opiate-like activity. It has high affinity and selectivity for delta-type opioid receptors. The chain is Dermorphin-1 from Phyllomedusa sauvagei (Sauvage's leaf frog).